A 265-amino-acid chain; its full sequence is Capsule polysaccharide export inner-membrane protein BexB (265 aa).

6 consecutive transmembrane segments (helical) span residues 37 to 57 (IGFFWLFVEPLLMTFFIVMMW), 64 to 84 (KFSTLNMIAFVMTGYPMAMMW), 118 to 138 (LLEVAGASIAQILFMAILVMI), 151 to 171 (LIAWFLMAMFAFALGLIICAI), 178 to 198 (FGKIWGTLSFVLLPISGAFFF), and 235 to 255 (ESIGFLVVSDLALLLLGLVMV). An ABC transmembrane type-2 domain is found at 37-258 (IGFFWLFVEP…LLGLVMVKNF (222 aa)).

The protein belongs to the ABC-2 integral membrane protein family.

The protein localises to the cell inner membrane. May form an ATP-driven capsule polysaccharide export apparatus, in association with the BexA, BexC and BexD proteins. This chain is Capsule polysaccharide export inner-membrane protein BexB (bexB), found in Haemophilus influenzae.